A 95-amino-acid chain; its full sequence is Signal recognition particle 19 kDa protein (95 aa).

This sequence belongs to the SRP19 family. In terms of assembly, part of the signal recognition particle protein translocation system, which is composed of SRP and FtsY. Archaeal SRP consists of a 7S RNA molecule of 300 nucleotides and two protein subunits: SRP54 and SRP19.

The protein localises to the cytoplasm. Functionally, involved in targeting and insertion of nascent membrane proteins into the cytoplasmic membrane. Binds directly to 7S RNA and mediates binding of the 54 kDa subunit of the SRP. The chain is Signal recognition particle 19 kDa protein from Pyrobaculum islandicum (strain DSM 4184 / JCM 9189 / GEO3).